A 205-amino-acid polypeptide reads, in one-letter code: Large ribosomal subunit protein uL4 (205 aa).

A disordered region spans residues Arg-43 to Asn-95. The segment covering Ala-48–His-57 has biased composition (basic and acidic residues). A compositionally biased stretch (basic residues) spans Ser-58–Gly-69.

Belongs to the universal ribosomal protein uL4 family. In terms of assembly, part of the 50S ribosomal subunit.

Functionally, one of the primary rRNA binding proteins, this protein initially binds near the 5'-end of the 23S rRNA. It is important during the early stages of 50S assembly. It makes multiple contacts with different domains of the 23S rRNA in the assembled 50S subunit and ribosome. In terms of biological role, forms part of the polypeptide exit tunnel. The protein is Large ribosomal subunit protein uL4 of Bordetella bronchiseptica (strain ATCC BAA-588 / NCTC 13252 / RB50) (Alcaligenes bronchisepticus).